The following is a 260-amino-acid chain: Thiazole synthase (260 aa).

K100 acts as the Schiff-base intermediate with DXP in catalysis. Residues G161, 187–188 (AG), and 209–210 (NT) contribute to the 1-deoxy-D-xylulose 5-phosphate site.

This sequence belongs to the ThiG family. In terms of assembly, homotetramer. Forms heterodimers with either ThiH or ThiS.

Its subcellular location is the cytoplasm. It carries out the reaction [ThiS sulfur-carrier protein]-C-terminal-Gly-aminoethanethioate + 2-iminoacetate + 1-deoxy-D-xylulose 5-phosphate = [ThiS sulfur-carrier protein]-C-terminal Gly-Gly + 2-[(2R,5Z)-2-carboxy-4-methylthiazol-5(2H)-ylidene]ethyl phosphate + 2 H2O + H(+). It functions in the pathway cofactor biosynthesis; thiamine diphosphate biosynthesis. Functionally, catalyzes the rearrangement of 1-deoxy-D-xylulose 5-phosphate (DXP) to produce the thiazole phosphate moiety of thiamine. Sulfur is provided by the thiocarboxylate moiety of the carrier protein ThiS. In vitro, sulfur can be provided by H(2)S. The polypeptide is Thiazole synthase (Dechloromonas aromatica (strain RCB)).